We begin with the raw amino-acid sequence, 142 residues long: Phosphoribosyl-AMP cyclohydrolase (142 aa).

Residue aspartate 85 coordinates Mg(2+). Cysteine 86 is a Zn(2+) binding site. Mg(2+)-binding residues include aspartate 87 and aspartate 89. Positions 102 and 109 each coordinate Zn(2+). Residues 120–142 (GEPPTPVGAGERQPASGTADAAP) form a disordered region.

Belongs to the PRA-CH family. Homodimer. Mg(2+) is required as a cofactor. The cofactor is Zn(2+).

Its subcellular location is the cytoplasm. The enzyme catalyses 1-(5-phospho-beta-D-ribosyl)-5'-AMP + H2O = 1-(5-phospho-beta-D-ribosyl)-5-[(5-phospho-beta-D-ribosylamino)methylideneamino]imidazole-4-carboxamide. It participates in amino-acid biosynthesis; L-histidine biosynthesis; L-histidine from 5-phospho-alpha-D-ribose 1-diphosphate: step 3/9. In terms of biological role, catalyzes the hydrolysis of the adenine ring of phosphoribosyl-AMP. This is Phosphoribosyl-AMP cyclohydrolase from Acidothermus cellulolyticus (strain ATCC 43068 / DSM 8971 / 11B).